The sequence spans 228 residues: UPF0173 metal-dependent hydrolase Smar_0891 (228 aa).

The protein belongs to the UPF0173 family.

The sequence is that of UPF0173 metal-dependent hydrolase Smar_0891 from Staphylothermus marinus (strain ATCC 43588 / DSM 3639 / JCM 9404 / F1).